We begin with the raw amino-acid sequence, 89 residues long: Large ribosomal subunit protein bL27 (89 aa).

The tract at residues 1–26 (MAQKKAGGSSRNGRDSVGQRRGVKRF) is disordered.

It belongs to the bacterial ribosomal protein bL27 family.

This Desulfovibrio desulfuricans (strain ATCC 27774 / DSM 6949 / MB) protein is Large ribosomal subunit protein bL27.